Here is a 505-residue protein sequence, read N- to C-terminus: MSEGPVKFEKNTVISVFGASGDLAKKKTFPALFGLFREGYLDPSTKIFGYARSKLSMEEDLKSRVLPHLKKPHGEADDSKVEQFFKMVSYISGNYDTDEGFDELRTQIEKFEKSANVDVPHRLFYLALPPSVFLTVAKQIKSRVYAENGITRVIVEKPFGHDLASARELQKNLGPLFKEEELYRIDHYLGKELVKNLLVLRFGNQFLNASWNRDNIQSVQISFKERFGTEGRGGYFDSIGIIRDVMQNHLLQIMTLLTMERPVSFDPESIRDEKVKVLKAVAPIDTDDVLLGQYGKSEDGSKPAYVDDDTVDKDSKCVTFAAMTFNIENERWEGVPIMMRAGKALNESKVEIRLQYKAVASGVFKDIPNNELVIRVQPDAAVYLKFNAKTPGLSNATQVTDLNLTYASRYQDFWIPEAYEVLIRDALLGDHSNFVRDDELDISWGIFTPLLKHIERPDGPTPEIYPYGSRGPKGLKEYMQKHKYVMPEKHPYAWPVTKPEDTKDN.

Residue serine 2 is modified to N-acetylserine. Residues 18–25 (GASGDLAK) and arginine 52 each bind NADP(+). Serine 142 is modified (phosphoserine). Residue tyrosine 145 is modified to Phosphotyrosine. Lysine 157 contacts NADP(+). D-glucose 6-phosphate contacts are provided by residues lysine 157, 187 to 191 (HYLGK), glutamate 225, and aspartate 244. Histidine 249 functions as the Proton acceptor in the catalytic mechanism. Arginine 340 contributes to the NADP(+) binding site. Lysine 343 serves as a coordination point for D-glucose 6-phosphate. NADP(+) is bound by residues lysine 349, arginine 353, and arginine 375. Glutamine 377 serves as a coordination point for D-glucose 6-phosphate. NADP(+) contacts are provided by residues 383 to 385 (YLK) and arginine 470.

It belongs to the glucose-6-phosphate dehydrogenase family.

The enzyme catalyses D-glucose 6-phosphate + NADP(+) = 6-phospho-D-glucono-1,5-lactone + NADPH + H(+). The protein operates within carbohydrate degradation; pentose phosphate pathway; D-ribulose 5-phosphate from D-glucose 6-phosphate (oxidative stage): step 1/3. Catalyzes the rate-limiting step of the oxidative pentose-phosphate pathway, which represents a route for the dissimilation of carbohydrates besides glycolysis. The main function of this enzyme is to provide reducing power (NADPH) and pentose phosphates for fatty acid and nucleic acid synthesis. The chain is Glucose-6-phosphate 1-dehydrogenase (ZWF1) from Saccharomyces cerevisiae (strain ATCC 204508 / S288c) (Baker's yeast).